Here is a 263-residue protein sequence, read N- to C-terminus: 4-hydroxy-2-oxo-heptane-1,7-dioate aldolase (263 aa).

Catalysis depends on His45, which acts as the Proton acceptor. Gln147 lines the substrate pocket. Glu149 is an a divalent metal cation binding site. Ala174 and Asp175 together coordinate substrate. An a divalent metal cation-binding site is contributed by Asp175.

It belongs to the HpcH/HpaI aldolase family. In terms of assembly, homohexamer; trimer of dimers. The cofactor is a divalent metal cation.

It carries out the reaction 4-hydroxy-2-oxoheptanedioate = succinate semialdehyde + pyruvate. It participates in aromatic compound metabolism; 4-hydroxyphenylacetate degradation; pyruvate and succinate semialdehyde from 4-hydroxyphenylacetate: step 7/7. Functionally, catalyzes the reversible retro-aldol cleavage of 4-hydroxy-2-ketoheptane-1,7-dioate (HKHD) to pyruvate and succinic semialdehyde. The protein is 4-hydroxy-2-oxo-heptane-1,7-dioate aldolase of Salmonella dublin (strain CT_02021853).